The sequence spans 592 residues: V-type ATP synthase alpha chain (592 aa).

232 to 239 (GPFGAGKT) serves as a coordination point for ATP.

The protein belongs to the ATPase alpha/beta chains family.

The enzyme catalyses ATP + H2O + 4 H(+)(in) = ADP + phosphate + 5 H(+)(out). Functionally, produces ATP from ADP in the presence of a proton gradient across the membrane. The V-type alpha chain is a catalytic subunit. This chain is V-type ATP synthase alpha chain, found in Clostridium botulinum (strain Alaska E43 / Type E3).